Reading from the N-terminus, the 1139-residue chain is MNSIKIDSSTKIVIEYIDKLRNCSNEKRQKVSSVIRPVDFPGISTQQLCDILIRFAYNGTYIDDVFRDHLLKLVVDKSITWNQVIHSVINTKTDRIYSKCLQCELIREMVNYVQIKSFSDKLHADELISIMKPTVFFLAQLIQDVLSDEDELEMIQIEYGDVRKAYYKPLEALSAFIHDDLCSSLLAFSEASEITHQLELCRDSFSKLRSPDKSATTLVEMLIERHIEKCKPVKFQYIPEGIALFDLKNPSIRILIPIFACFKNHESSKLMAETIQTFAEIMRFYGPDVIFDILHGAILLKCEESMDLLHFPKQHRADFRWQSTTFFYKKLPQIIEYLIRSEKLTVAEVQFGLEKALTDLSMMFDAADVAWQNASFLTLLNELEPVLGKTITDPLRLRRREHMKTNDQLLPFADTDNQLIENTDIDKLLNAVKEVMNLQFGQTEEFSKLFVDKVKTGQTDNFDAITSILITEGRLMEVGKAFVLKNVEAQRSSAVGVNERIQIFDDTFILLSRILIKNPSVSINMFVNGGPGKSDAEQTMFYKWSMRYVKRVAKHRDPEPKDETEYIALRKEVEMLMRLANAEVGIEDDLENDVEEEMPEVQEPNIETQNVDEISIPDPLHLLIENDPTVTAESKETEEVKFNPEGVEQMDTNEKPAEISDSLIEPTLLEEPKDILENIIVPIIKVEAPKPDSPIKKKKDPDVTWHEVHCPLPRISRRTARAYLAQMKEGIPFWKTDDPNLNIGSILAAIPRLGQLLVDEHEEKRNRIDRKSAEENMTNILHAIESMPSLFLCLLEWLDCEPESGARTSLAFTINLSLERYLAVSTHGINYMKWIFIKSTVQQMIDELVDKSPAFPEVTCTAFSTARRFCPFVGRNENPDQLKLKHAWYYMRQQAWASPHALRLLEHANTAREYDVWSHIYISKTIKSGCGDIMTSSVDMIFSFLMLDDLNSIIRIHESLMAFWLSEDAGQCQADGRFDPLSIRVVIRLMTQVLLIAEWTLDRLLNEDPAFVERLNLKEVKAPEPEDPDKREKWIFLLRSMLERTINRFFKIVRKGLLSNVVNTIIQLLKSIAGSADCKAKRLLVKRIPPDLIFQLAYIEPSSVDYSLMNIYCDPDNKEHTQTKIMFLCALRRSQSFSF.

The Nuclear localization signal signature appears at 695–701 (IKKKKDP).

Expressed in seam cells and all six vulva precursor cells (VPC). After VPC division, expression is restricted to descendants of the VPC cell lineages P5.p, P6.p and P7.p (at protein level).

The protein localises to the nucleus. The protein resides in the cytoplasm. In terms of biological role, participates in the inductive signaling pathway downstream of let-60 Ras and the RAF/MAP kinase cascade to regulate specification and differentiation of many cell types. Positively regulates the fate of vulval precursor cells. Required for induction of the P12 and excretory duct cell fates. In males, it is also required for proper formation of spicules. Does not function in the signaling pathway that promotes exit from pachytene. Plays a role in responses to M.nematophilum-mediated bacterial infection by promoting tail swelling and preventing constipation. The protein is Protein lin-25 (lin-25) of Caenorhabditis elegans.